Consider the following 206-residue polypeptide: Small ribosomal subunit protein uS4 (206 aa).

The region spanning 94–156 is the S4 RNA-binding domain; the sequence is RRLDNVVYRL…SRRRMYFKNL (63 aa).

It belongs to the universal ribosomal protein uS4 family. As to quaternary structure, part of the 30S ribosomal subunit. Contacts protein S5. The interaction surface between S4 and S5 is involved in control of translational fidelity.

One of the primary rRNA binding proteins, it binds directly to 16S rRNA where it nucleates assembly of the body of the 30S subunit. Its function is as follows. With S5 and S12 plays an important role in translational accuracy. In Roseiflexus castenholzii (strain DSM 13941 / HLO8), this protein is Small ribosomal subunit protein uS4.